Consider the following 427-residue polypeptide: Glutamate-1-semialdehyde 2,1-aminomutase (427 aa).

K265 is modified (N6-(pyridoxal phosphate)lysine).

This sequence belongs to the class-III pyridoxal-phosphate-dependent aminotransferase family. HemL subfamily. As to quaternary structure, homodimer. The cofactor is pyridoxal 5'-phosphate.

It localises to the cytoplasm. The enzyme catalyses (S)-4-amino-5-oxopentanoate = 5-aminolevulinate. The protein operates within porphyrin-containing compound metabolism; protoporphyrin-IX biosynthesis; 5-aminolevulinate from L-glutamyl-tRNA(Glu): step 2/2. In Burkholderia pseudomallei (strain 668), this protein is Glutamate-1-semialdehyde 2,1-aminomutase.